An 837-amino-acid polypeptide reads, in one-letter code: Protein kintoun (837 aa).

Disordered stretches follow at residues 100 to 119, 205 to 224, 230 to 249, and 363 to 515; these read APSSRPGSGGDRGAAPGSHW, LPGVIPARPDGEPKGPLPDF, YPAAPGPRAPSPPEAALQPA, and AAAP…GPGT. Pro residues predominate over residues 233–242; that stretch reads APGPRAPSPP. Residues 428 to 442 are compositionally biased toward basic and acidic residues; that stretch reads GEERVPKPGEQDLSR. Positions 445–459 are enriched in low complexity; that stretch reads GSPPGSVEEPSPGGE. Residues Ser-461 and Ser-467 each carry the phosphoserine modification. A compositionally biased stretch (basic and acidic residues) spans 484–498; sequence ESARGDSSVETREES. Residues Ser-640, Ser-641, and Ser-773 each carry the phosphoserine modification.

This sequence belongs to the PIH1 family. Kintoun subfamily. As to quaternary structure, interacts with CFAP300. Interacts with DNAAF4. Interacts with DNAAF6/PIH1D3. Interacts with DNAI2 and HSPA1A.

It localises to the cytoplasm. The protein localises to the dynein axonemal particle. In terms of biological role, required for cytoplasmic pre-assembly of axonemal dyneins, thereby playing a central role in motility in cilia and flagella. Involved in pre-assembly of dynein arm complexes in the cytoplasm before intraflagellar transport loads them for the ciliary compartment. This Homo sapiens (Human) protein is Protein kintoun.